The following is a 226-amino-acid chain: Thiopurine S-methyltransferase (226 aa).

Positions 16, 51, 72, and 131 each coordinate S-adenosyl-L-methionine.

The protein belongs to the class I-like SAM-binding methyltransferase superfamily. TPMT family.

The protein resides in the cytoplasm. The catalysed reaction is S-adenosyl-L-methionine + a thiopurine = S-adenosyl-L-homocysteine + a thiopurine S-methylether.. This chain is Thiopurine S-methyltransferase, found in Francisella tularensis subsp. tularensis (strain SCHU S4 / Schu 4).